Reading from the N-terminus, the 49-residue chain is MRVKIALVCTECKNRNYHTTKNKKNDPDRLELKKYCKHCKKHTLHRETK.

It belongs to the bacterial ribosomal protein bL33 family.

The protein is Large ribosomal subunit protein bL33 of Caldanaerobacter subterraneus subsp. tengcongensis (strain DSM 15242 / JCM 11007 / NBRC 100824 / MB4) (Thermoanaerobacter tengcongensis).